A 470-amino-acid polypeptide reads, in one-letter code: Aromatic amino acid aminotransferase C569.07 (470 aa).

Belongs to the class-I pyridoxal-phosphate-dependent aminotransferase family. Pyridoxal 5'-phosphate serves as cofactor.

The protein resides in the cytoplasm. The enzyme catalyses an aromatic L-alpha-amino acid + 2-oxoglutarate = an aromatic oxo-acid + L-glutamate. Functionally, has aromatic amino acid transaminase activity. The protein is Aromatic amino acid aminotransferase C569.07 of Schizosaccharomyces pombe (strain 972 / ATCC 24843) (Fission yeast).